The sequence spans 198 residues: MKIIIATHNPHKTEEIKNFFKGYPVEIYSMADLGIKEDIEETGNTIEENALIKARFLKEKVDGIVIADDTGLFVEHLNGQPGVYSARFAGENATYEDNNKKLLKLLEGVPYEKRKAYFKTVIAVVEREKETLLEGKLEGHILDHPRGKNGFGYDPVFYVDNLEKSLAELTMEEKNKISHRADALMKLKNYILKRLEEK.

Residue 7 to 12 (THNPHK) coordinates substrate. E40 and D69 together coordinate Mg(2+). D69 acts as the Proton acceptor in catalysis. Residues T70, 151–154 (FGYD), K174, and 179–180 (HR) contribute to the substrate site.

This sequence belongs to the HAM1 NTPase family. In terms of assembly, homodimer. The cofactor is Mg(2+).

The catalysed reaction is XTP + H2O = XMP + diphosphate + H(+). It catalyses the reaction dITP + H2O = dIMP + diphosphate + H(+). It carries out the reaction ITP + H2O = IMP + diphosphate + H(+). In terms of biological role, pyrophosphatase that catalyzes the hydrolysis of nucleoside triphosphates to their monophosphate derivatives, with a high preference for the non-canonical purine nucleotides XTP (xanthosine triphosphate), dITP (deoxyinosine triphosphate) and ITP. Seems to function as a house-cleaning enzyme that removes non-canonical purine nucleotides from the nucleotide pool, thus preventing their incorporation into DNA/RNA and avoiding chromosomal lesions. This is dITP/XTP pyrophosphatase from Thermoanaerobacter pseudethanolicus (strain ATCC 33223 / 39E) (Clostridium thermohydrosulfuricum).